A 66-amino-acid chain; its full sequence is Conotoxin Bu1.4 (66 aa).

The N-terminal stretch at 1-23 (MGMRMRMMFTVFLLVVLANTVVS) is a signal peptide. Positions 24–46 (FPSDRDSDGADAEASDEPVEFER) are excised as a propeptide. The tract at residues 25–48 (PSDRDSDGADAEASDEPVEFERDE) is disordered. Residues 32–42 (GADAEASDEPV) are compositionally biased toward acidic residues. 2 cysteine pairs are disulfide-bonded: cysteine 51–cysteine 57 and cysteine 52–cysteine 62. Threonine 63 carries the post-translational modification Threonine amide.

Belongs to the conotoxin A superfamily. As to expression, expressed by the venom duct.

The protein localises to the secreted. In Conus bullatus (Bubble cone), this protein is Conotoxin Bu1.4.